The chain runs to 159 residues: Major latex protein 149 (159 aa).

This sequence belongs to the MLP family. As to expression, laticifer.

It is found in the vacuole. It localises to the cytoplasmic vesicle. Functionally, not known; MLPs constitute up to 50% of the soluble latex protein. This Papaver somniferum (Opium poppy) protein is Major latex protein 149 (MLP149).